Reading from the N-terminus, the 554-residue chain is Urocanate hydratase (554 aa).

NAD(+) contacts are provided by residues 51–52 (GG), glutamine 129, 175–177 (GMG), glutamate 195, 241–242 (NA), 262–266 (QTSAH), 272–273 (YL), and tyrosine 321. Cysteine 409 is a catalytic residue. An NAD(+)-binding site is contributed by glycine 491.

The protein belongs to the urocanase family. NAD(+) is required as a cofactor.

The protein resides in the cytoplasm. The enzyme catalyses 4-imidazolone-5-propanoate = trans-urocanate + H2O. Its pathway is amino-acid degradation; L-histidine degradation into L-glutamate; N-formimidoyl-L-glutamate from L-histidine: step 2/3. Catalyzes the conversion of urocanate to 4-imidazolone-5-propionate. The sequence is that of Urocanate hydratase from Caulobacter vibrioides (strain ATCC 19089 / CIP 103742 / CB 15) (Caulobacter crescentus).